The chain runs to 87 residues: U3-theraphotoxin-Cg1b (87 aa).

Positions 1-23 are cleaved as a signal peptide; that stretch reads MRTFTLIAILTCAVLVIFHVSAA. A propeptide spanning residues 24–48 is cleaved from the precursor; that stretch reads EELEAQDVIQPEDIFTGVATLEEDR. Cystine bridges form between C52/C65, C56/C79, and C73/C84.

Belongs to the neurotoxin 12 (Hwtx-2) family. 03 (juruin) subfamily. In terms of tissue distribution, expressed by the venom gland.

It localises to the secreted. Probable ion channel inhibitor. This is U3-theraphotoxin-Cg1b from Chilobrachys guangxiensis (Chinese earth tiger tarantula).